The chain runs to 480 residues: DNA repair protein RadA (480 aa).

The segment at 10-27 (CSECRHVSAKWVGRCLEC) adopts a C4-type zinc-finger fold. 95 to 102 (GDPGVGKS) contributes to the ATP binding site. A RadA KNRFG motif motif is present at residues 254–258 (KNRFG). The interval 353–480 (DIYLSTVGGM…TGHVPLGRGT (128 aa)) is lon-protease-like. A disordered region spans residues 459-480 (GTTLATPPSHSGTGHVPLGRGT). Positions 461–470 (TLATPPSHSG) are enriched in polar residues.

Belongs to the RecA family. RadA subfamily.

DNA-dependent ATPase involved in processing of recombination intermediates, plays a role in repairing DNA breaks. Stimulates the branch migration of RecA-mediated strand transfer reactions, allowing the 3' invading strand to extend heteroduplex DNA faster. Binds ssDNA in the presence of ADP but not other nucleotides, has ATPase activity that is stimulated by ssDNA and various branched DNA structures, but inhibited by SSB. Does not have RecA's homology-searching function. This Mycobacterium tuberculosis (strain CDC 1551 / Oshkosh) protein is DNA repair protein RadA.